We begin with the raw amino-acid sequence, 353 residues long: DNA-directed RNA polymerase subunit alpha (353 aa).

The interval 1–234 (MVQEKVRVST…DLFIPFLHTE (234 aa)) is alpha N-terminal domain (alpha-NTD). The interval 266–353 (KKIALKSIFI…LAQSIYSESG (88 aa)) is alpha C-terminal domain (alpha-CTD).

The protein belongs to the RNA polymerase alpha chain family. In terms of assembly, in plastids the minimal PEP RNA polymerase catalytic core is composed of four subunits: alpha, beta, beta', and beta''. When a (nuclear-encoded) sigma factor is associated with the core the holoenzyme is formed, which can initiate transcription.

The protein localises to the plastid. Its subcellular location is the chloroplast. The enzyme catalyses RNA(n) + a ribonucleoside 5'-triphosphate = RNA(n+1) + diphosphate. Functionally, DNA-dependent RNA polymerase catalyzes the transcription of DNA into RNA using the four ribonucleoside triphosphates as substrates. This Panax ginseng (Korean ginseng) protein is DNA-directed RNA polymerase subunit alpha.